We begin with the raw amino-acid sequence, 308 residues long: Elongation factor Ts (308 aa).

The tract at residues 80–83 (TDFV) is involved in Mg(2+) ion dislocation from EF-Tu.

The protein belongs to the EF-Ts family.

It is found in the cytoplasm. Its function is as follows. Associates with the EF-Tu.GDP complex and induces the exchange of GDP to GTP. It remains bound to the aminoacyl-tRNA.EF-Tu.GTP complex up to the GTP hydrolysis stage on the ribosome. The polypeptide is Elongation factor Ts (Verminephrobacter eiseniae (strain EF01-2)).